The sequence spans 723 residues: Envelope glycoprotein H (723 aa).

Positions M1 to T23 are cleaved as a signal peptide. Topologically, residues S24–F700 are virion surface. 4 N-linked (GlcNAc...) asparagine; by host glycosylation sites follow: N39, N45, N144, and N174. Residues H197 to V263 form an interaction with gL region. 6 N-linked (GlcNAc...) asparagine; by host glycosylation sites follow: N270, N340, N411, N543, N621, and N681. Residues M701 to H721 traverse the membrane as a helical segment. Residues M722–I723 are Intravirion-facing.

The protein belongs to the herpesviridae glycoprotein H family. As to quaternary structure, interacts with glycoprotein L (gL); this interaction is necessary for the correct processing and cell surface expression of gH. The heterodimer gH/gL seems to interact with gB trimers during fusion. N-glycosylated, O-glycosylated, and sialylated.

It localises to the virion membrane. It is found in the host cell membrane. Its subcellular location is the host endosome membrane. Its function is as follows. The heterodimer glycoprotein H-glycoprotein L is required for the fusion of viral and plasma membranes leading to virus entry into the host cell. Following initial binding to host receptor, membrane fusion is mediated by the fusion machinery composed of gB and the heterodimer gH/gL. May also be involved in the fusion between the virion envelope and the outer nuclear membrane during virion morphogenesis. The sequence is that of Envelope glycoprotein H from Guinea pig cytomegalovirus (strain 22122) (GPCMV).